The chain runs to 257 residues: Coenzyme F420:L-glutamate ligase (257 aa).

GTP-binding positions include 9–12 (VPEV), 38–39 (ST), and K43. D113 lines the a divalent metal cation pocket. A GTP-binding site is contributed by N116. D154, T155, and E212 together coordinate a divalent metal cation. 210–217 (TGEGDGGT) is a binding site for GTP.

This sequence belongs to the CofE family. In terms of assembly, homodimer. The cofactor is Mg(2+). Mn(2+) serves as cofactor. K(+) is required as a cofactor.

It catalyses the reaction oxidized coenzyme F420-0 + GTP + L-glutamate = oxidized coenzyme F420-1 + GDP + phosphate + H(+). It carries out the reaction oxidized coenzyme F420-1 + GTP + L-glutamate = oxidized coenzyme F420-2 + GDP + phosphate + H(+). Its pathway is cofactor biosynthesis; coenzyme F420 biosynthesis. Its function is as follows. Catalyzes the GTP-dependent successive addition of two or more gamma-linked L-glutamates to the L-lactyl phosphodiester of 7,8-didemethyl-8-hydroxy-5-deazariboflavin (F420-0) to form coenzyme F420-0-glutamyl-glutamate (F420-2) or polyglutamated F420 derivatives. The protein is Coenzyme F420:L-glutamate ligase of Haloarcula marismortui (strain ATCC 43049 / DSM 3752 / JCM 8966 / VKM B-1809) (Halobacterium marismortui).